A 338-amino-acid polypeptide reads, in one-letter code: Ketol-acid reductoisomerase (NADP(+)) (338 aa).

Residues 1 to 181 (MNIYYDKDCD…GGGRAGIIET (181 aa)) enclose the KARI N-terminal Rossmann domain. Residues 24–27 (YGSQ), Arg47, Ser50, Ser52, and 82–85 (DEHQ) contribute to the NADP(+) site. Residue His107 is part of the active site. Gly133 contacts NADP(+). The KARI C-terminal knotted domain maps to 182–327 (AFREETETDL…ERLRSMMPWI (146 aa)). Mg(2+) contacts are provided by Asp190, Glu194, Glu226, and Glu230. Ser251 serves as a coordination point for substrate.

The protein belongs to the ketol-acid reductoisomerase family. It depends on Mg(2+) as a cofactor.

It carries out the reaction (2R)-2,3-dihydroxy-3-methylbutanoate + NADP(+) = (2S)-2-acetolactate + NADPH + H(+). It catalyses the reaction (2R,3R)-2,3-dihydroxy-3-methylpentanoate + NADP(+) = (S)-2-ethyl-2-hydroxy-3-oxobutanoate + NADPH + H(+). It participates in amino-acid biosynthesis; L-isoleucine biosynthesis; L-isoleucine from 2-oxobutanoate: step 2/4. The protein operates within amino-acid biosynthesis; L-valine biosynthesis; L-valine from pyruvate: step 2/4. Involved in the biosynthesis of branched-chain amino acids (BCAA). Catalyzes an alkyl-migration followed by a ketol-acid reduction of (S)-2-acetolactate (S2AL) to yield (R)-2,3-dihydroxy-isovalerate. In the isomerase reaction, S2AL is rearranged via a Mg-dependent methyl migration to produce 3-hydroxy-3-methyl-2-ketobutyrate (HMKB). In the reductase reaction, this 2-ketoacid undergoes a metal-dependent reduction by NADPH to yield (R)-2,3-dihydroxy-isovalerate. This chain is Ketol-acid reductoisomerase (NADP(+)), found in Nitrosococcus oceani (strain ATCC 19707 / BCRC 17464 / JCM 30415 / NCIMB 11848 / C-107).